Reading from the N-terminus, the 577-residue chain is 2-succinyl-5-enolpyruvyl-6-hydroxy-3-cyclohexene-1-carboxylate synthase (577 aa).

It belongs to the TPP enzyme family. MenD subfamily. In terms of assembly, homodimer. Mg(2+) serves as cofactor. The cofactor is Mn(2+). It depends on thiamine diphosphate as a cofactor.

The enzyme catalyses isochorismate + 2-oxoglutarate + H(+) = 5-enolpyruvoyl-6-hydroxy-2-succinyl-cyclohex-3-ene-1-carboxylate + CO2. It functions in the pathway quinol/quinone metabolism; 1,4-dihydroxy-2-naphthoate biosynthesis; 1,4-dihydroxy-2-naphthoate from chorismate: step 2/7. Its pathway is quinol/quinone metabolism; menaquinone biosynthesis. Its function is as follows. Catalyzes the thiamine diphosphate-dependent decarboxylation of 2-oxoglutarate and the subsequent addition of the resulting succinic semialdehyde-thiamine pyrophosphate anion to isochorismate to yield 2-succinyl-5-enolpyruvyl-6-hydroxy-3-cyclohexene-1-carboxylate (SEPHCHC). The sequence is that of 2-succinyl-5-enolpyruvyl-6-hydroxy-3-cyclohexene-1-carboxylate synthase from Porphyromonas gingivalis (strain ATCC BAA-308 / W83).